Consider the following 422-residue polypeptide: Putative polyketide beta-ketoacyl synthase 1 (422 aa).

The region spanning 2-416 is the Ketosynthase family 3 (KS3) domain; the sequence is SRRVVVTGIG…GFQSAVVLTG (415 aa). Residues Cys169, His309, and His346 each act as for beta-ketoacyl synthase activity in the active site.

It belongs to the thiolase-like superfamily. Beta-ketoacyl-ACP synthases family.

Involved in developmentally regulated synthesis of a compound biosynthetically related to polyketide antibiotics which is essential for spore color in Streptomyces halstedii. This Streptomyces halstedii protein is Putative polyketide beta-ketoacyl synthase 1 (sch1).